A 421-amino-acid chain; its full sequence is Elongation factor 1-alpha (421 aa).

The tr-type G domain occupies 4–220 (NRHQNLAVIG…NGLPVPQPPT (217 aa)). Positions 13–20 (GHVDHGKS) are G1. 13–20 (GHVDHGKS) serves as a coordination point for GTP. Serine 20 is a binding site for Mg(2+). The segment at 69–73 (GVTID) is G2. A G3 region spans residues 90 to 93 (DCPG). GTP-binding positions include 90–94 (DCPGH) and 145–148 (NKMD). Residues 145-148 (NKMD) are G4. The G5 stretch occupies residues 184-186 (SAF).

Belongs to the TRAFAC class translation factor GTPase superfamily. Classic translation factor GTPase family. EF-Tu/EF-1A subfamily.

The protein resides in the cytoplasm. It catalyses the reaction GTP + H2O = GDP + phosphate + H(+). GTP hydrolase that promotes the GTP-dependent binding of aminoacyl-tRNA to the A-site of ribosomes during protein biosynthesis. The chain is Elongation factor 1-alpha from Halobacterium salinarum (strain ATCC 700922 / JCM 11081 / NRC-1) (Halobacterium halobium).